A 330-amino-acid polypeptide reads, in one-letter code: MVNIIQPKVDPLPTGIGLTGKTVVITGASAGMGLEATKQLLRLRASTVILAVRNVAKGEACATSLRQDRRIQTHNPKPTIKVMELDVDDYHSVQRFSKQLREEIPVVHILILNAGIGLLKLERSASGHDRTTQVNYYSNVLLIAELLPYLQAGAEKTGSPARISWVGSRAHEVTSLEKKAPIKPGEGVLAHMDKEEAFVPFQRYGDSKLLCVMFMYNLAPRLDPKKVIINMMCPGMVNTNMSDVLPMHLRLIVNVVKSFRARPVEVGGWIILNSALVVGPESHGKFLNDKTISDKSAFIKSPAGQEIQKKLWEETINEIGTLTTLPAELK.

Residues Lys57, Asp86, Asn113, Tyr204, and Lys208 each contribute to the NADP(+) site. Tyr204 (proton donor) is an active-site residue. The Lowers pKa of active site Tyr role is filled by Lys208.

This sequence belongs to the short-chain dehydrogenases/reductases (SDR) family.

It participates in secondary metabolite biosynthesis; terpenoid biosynthesis. In terms of biological role, short chain dehydrogenase; part of the gene cluster that mediates the biosynthesis of macrophorins, isoprenoid epoxycyclohexenones containing cyclized drimane moieties. The first step of the pathway is the synthesis of 6-methylsalicylic acid (6-MSA) by the polyketide synthase macA. 6-MSA is then converted to m-cresol by the decarboxylase macB. The cytochrome P450 monooxygenase macC then catalyzes the oxidation of m-cresol to toluquinol. Epoxidation of toluquinol is then performed by the short chain dehydrogenase macD, with the help of macE, and a further prenylation by macG leads to 7-deacetoxyyanuthone A. The next step is the hydroxylation of C-22 of 7-deacetoxyyanuthone A by the cytochrome P450 monooxygenase macH to yield 22-deacetylyanuthone A. O-Mevalon transferase macI then attaches mevalon to the hydroxyl group of 22-deacetylyanuthone A to produce yanuthone E. The terpene cyclase macJ catalyzes the cyclization of 22-deacetylyanuthone A to macrophorin A. MacJ is also able to catalyze cyclization of yanuthone E and 7-deacetoxyyanuthone A to their corresponding macrophorins. The macJ products can be further modified by macH and macJ, as well as by the FAD-dependent monooxygenase macF, to produce additional macrophorins, including 4'-oxomacrophorin A, 4'-oxomacrophorin D and 4'-oxomacrophorin E. The chain is Short chain dehydrogenase macD from Penicillium terrestre.